Reading from the N-terminus, the 216-residue chain is Ribonuclease HII (216 aa).

Residues D28–R216 form the RNase H type-2 domain. D34, E35, and D126 together coordinate a divalent metal cation.

This sequence belongs to the RNase HII family. The cofactor is Mn(2+). It depends on Mg(2+) as a cofactor.

The protein resides in the cytoplasm. The catalysed reaction is Endonucleolytic cleavage to 5'-phosphomonoester.. Endonuclease that specifically degrades the RNA of RNA-DNA hybrids. This chain is Ribonuclease HII, found in Burkholderia vietnamiensis (strain G4 / LMG 22486) (Burkholderia cepacia (strain R1808)).